Consider the following 326-residue polypeptide: tRNA-modifying protein YgfZ (326 aa).

The folate site is built by W27 and W189.

It belongs to the tRNA-modifying YgfZ family.

It localises to the cytoplasm. Its function is as follows. Folate-binding protein involved in regulating the level of ATP-DnaA and in the modification of some tRNAs. It is probably a key factor in regulatory networks that act via tRNA modification, such as initiation of chromosomal replication. The chain is tRNA-modifying protein YgfZ from Salmonella paratyphi C (strain RKS4594).